The sequence spans 742 residues: Protein-associating with the carboxyl-terminal domain of ezrin (742 aa).

Residue glycine 2 is the site of N-myristoyl glycine attachment. Positions glycine 2 to phenylalanine 245 constitute a Protein kinase domain. HEAT repeat units follow at residues glutamate 199–threonine 238, leucine 285–glycine 323, leucine 333–glutamine 370, and glutamine 372–proline 409. Phosphoserine is present on serine 439. 3 disordered regions span residues leucine 506 to asparagine 544, serine 568 to glutamate 598, and glycine 629 to glutamate 652. Residues tryptophan 529–glutamate 539 show a composition bias toward acidic residues. Positions tryptophan 548–tryptophan 742 are interaction with EZR. Residue serine 707 is modified to Phosphoserine. The segment at glutamate 723–tryptophan 742 is disordered.

The protein belongs to the protein kinase superfamily. Interacts with EZR/VIL2 C-terminal domain. In terms of processing, may be myristoylated; myristoylation may target it to Golgi compartment. Phosphorylated. As to expression, ubiquitously expressed.

It localises to the cytoplasm. The protein localises to the golgi apparatus. It is found in the cell projection. Its subcellular location is the lamellipodium. May play a role in regulating cell adhesion/migration complexes in migrating cells. The sequence is that of Protein-associating with the carboxyl-terminal domain of ezrin (SCYL3) from Homo sapiens (Human).